The sequence spans 290 residues: Acetylglutamate kinase (290 aa).

Substrate is bound by residues 65 to 66, Arg87, and Asn186; that span reads GG.

Belongs to the acetylglutamate kinase family. ArgB subfamily.

The protein resides in the cytoplasm. It carries out the reaction N-acetyl-L-glutamate + ATP = N-acetyl-L-glutamyl 5-phosphate + ADP. It participates in amino-acid biosynthesis; L-arginine biosynthesis; N(2)-acetyl-L-ornithine from L-glutamate: step 2/4. Catalyzes the ATP-dependent phosphorylation of N-acetyl-L-glutamate. In Mycobacterium sp. (strain KMS), this protein is Acetylglutamate kinase.